A 378-amino-acid polypeptide reads, in one-letter code: Flap endonuclease 1 (378 aa).

The N-domain stretch occupies residues 1–105; it reads MGIKGLNSII…HELDKRTERR (105 aa). Aspartate 34 provides a ligand contact to Mg(2+). DNA-binding residues include arginine 47 and arginine 71. Residues aspartate 87, glutamate 156, glutamate 158, aspartate 177, and aspartate 179 each coordinate Mg(2+). Residues 120–251 form an I-domain region; sequence EIMKHERRLV…VTALKLIKEH (132 aa). Glutamate 156 contacts DNA. DNA-binding residues include glycine 229 and aspartate 231. Residue aspartate 231 coordinates Mg(2+). Residues 337 to 345 are interaction with PCNA; the sequence is VQGRLDSFF. Residues 356 to 367 show a composition bias toward low complexity; sequence AASARKAQAAKK. The interval 356–378 is disordered; sequence AASARKAQAAKKTNQKGKVLKRR. Over residues 368–378 the composition is skewed to basic residues; sequence TNQKGKVLKRR.

Belongs to the XPG/RAD2 endonuclease family. FEN1 subfamily. As to quaternary structure, interacts with PCNA. Three molecules of FEN1 bind to one PCNA trimer with each molecule binding to one PCNA monomer. PCNA stimulates the nuclease activity without altering cleavage specificity. It depends on Mg(2+) as a cofactor. In terms of processing, phosphorylated. Phosphorylation upon DNA damage induces relocalization to the nuclear plasma.

Its subcellular location is the nucleus. It localises to the nucleolus. The protein resides in the nucleoplasm. The protein localises to the mitochondrion. In terms of biological role, structure-specific nuclease with 5'-flap endonuclease and 5'-3' exonuclease activities involved in DNA replication and repair. During DNA replication, cleaves the 5'-overhanging flap structure that is generated by displacement synthesis when DNA polymerase encounters the 5'-end of a downstream Okazaki fragment. It enters the flap from the 5'-end and then tracks to cleave the flap base, leaving a nick for ligation. Also involved in the long patch base excision repair (LP-BER) pathway, by cleaving within the apurinic/apyrimidinic (AP) site-terminated flap. Acts as a genome stabilization factor that prevents flaps from equilibrating into structures that lead to duplications and deletions. Also possesses 5'-3' exonuclease activity on nicked or gapped double-stranded DNA, and exhibits RNase H activity. Also involved in replication and repair of rDNA and in repairing mitochondrial DNA. The protein is Flap endonuclease 1 of Eremothecium gossypii (strain ATCC 10895 / CBS 109.51 / FGSC 9923 / NRRL Y-1056) (Yeast).